The sequence spans 345 residues: Opioid-binding protein/cell adhesion molecule (345 aa).

Residues 1 to 27 form the signal peptide; sequence MGVCGYLFLPWKCLVVVSLRLLFLVPT. Ig-like C2-type domains lie at 39–126, 136–219, and 223–310; these read PKAM…PKTS, PQIM…VKIT, and PPYI…ASIT. N-linked (GlcNAc...) asparagine glycosylation is found at Asn44, Asn70, and Asn140. Cysteines 57 and 115 form a disulfide. Disulfide bonds link Cys157–Cys202 and Cys244–Cys296. Asn285, Asn293, and Asn306 each carry an N-linked (GlcNAc...) asparagine glycan. The GPI-anchor amidated asparagine moiety is linked to residue Asn322. Residues 323-345 constitute a propeptide, removed in mature form; it reads SASRALACLWLSGTFFAHFFIKF.

Belongs to the immunoglobulin superfamily. IgLON family.

Its subcellular location is the cell membrane. Functionally, binds opioids in the presence of acidic lipids; probably involved in cell contact. The polypeptide is Opioid-binding protein/cell adhesion molecule (Opcml) (Rattus norvegicus (Rat)).